The chain runs to 696 residues: Polyribonucleotide nucleotidyltransferase (696 aa).

D489 and D495 together coordinate Mg(2+). Positions 556-615 constitute a KH domain; the sequence is PQYVTMKINPEKIRDVIGKGGVVIREITEATNCAIDISDDGTIKIAAHTTEEGEAAKRRI. The S1 motif domain occupies 625–693; that stretch reads GKVYEGTVVK…RQGRVRLSMK (69 aa).

It belongs to the polyribonucleotide nucleotidyltransferase family. In terms of assembly, component of the RNA degradosome, which is a multiprotein complex involved in RNA processing and mRNA degradation. Mg(2+) serves as cofactor.

The protein resides in the cytoplasm. It catalyses the reaction RNA(n+1) + phosphate = RNA(n) + a ribonucleoside 5'-diphosphate. Functionally, involved in mRNA degradation. Catalyzes the phosphorolysis of single-stranded polyribonucleotides processively in the 3'- to 5'-direction. This is Polyribonucleotide nucleotidyltransferase from Coxiella burnetii (strain RSA 331 / Henzerling II).